A 554-amino-acid polypeptide reads, in one-letter code: Protein NODULATION SIGNALING PATHWAY 1 (554 aa).

Residues 76 to 165 (TTSTTSLEPN…NSNNGNNKDG (90 aa)) form a disordered region. Positions 82 to 91 (LEPNSFNNIP) are enriched in polar residues. Basic and acidic residues predominate over residues 95 to 107 (LPKKRNAEDELSL). Residues 150–162 (AKANGSNSNNGNN) show a composition bias toward low complexity. The region spanning 159 to 548 (NGNNKDGRWA…QPVSFCSLWK (390 aa)) is the GRAS domain. The leucine repeat I (LRI) stretch occupies residues 166–227 (RWAEQLLNPC…HHLSSSSSST (62 aa)). Residues 246–315 (LLKFYEFSPW…GGPPPLVRLT (70 aa)) are VHIID. The short motif at 281-285 (LHILD) is the VHIID element. The segment at 331–373 (TPFSIGPCGDTFSSGLLGYAQSLNVNLQIKKLDNHPLQTLNAK) is leucine repeat II (LRII). Positions 383–468 (LIVCAQFRLH…RDSDERKMME (86 aa)) are PFYRE. The SAW stretch occupies residues 471–548 (AAKALTNQRE…QPVSFCSLWK (78 aa)).

Belongs to the GRAS family. In terms of tissue distribution, expressed in epidermal and cortical root cells.

Its subcellular location is the nucleus. Transcriptional regulator essential for Nod-factor-induced gene expression. Acts downstream of calcium spiking. May be a target of DMI3, a calcium/calmodulin-dependent protein kinase (CCaMK). Is essential for Nod factor-elicited expression of ERN1. Transcription factor involved in the control of strigolactone biosynthesis in roots through the activation of the beta-carotene isomerase D27, which participates in a pathway leading to biosynthesis of strigolactones. The protein is Protein NODULATION SIGNALING PATHWAY 1 of Medicago truncatula (Barrel medic).